A 273-amino-acid polypeptide reads, in one-letter code: Putative phosphoenolpyruvate synthase regulatory protein (273 aa).

G153–T160 provides a ligand contact to ADP.

It belongs to the pyruvate, phosphate/water dikinase regulatory protein family. PSRP subfamily.

It catalyses the reaction [pyruvate, water dikinase] + ADP = [pyruvate, water dikinase]-phosphate + AMP + H(+). It carries out the reaction [pyruvate, water dikinase]-phosphate + phosphate + H(+) = [pyruvate, water dikinase] + diphosphate. Functionally, bifunctional serine/threonine kinase and phosphorylase involved in the regulation of the phosphoenolpyruvate synthase (PEPS) by catalyzing its phosphorylation/dephosphorylation. The polypeptide is Putative phosphoenolpyruvate synthase regulatory protein (Sodalis glossinidius (strain morsitans)).